We begin with the raw amino-acid sequence, 1117 residues long: Endogenous retrovirus group K member 9 Pol protein (1117 aa).

Gly-2 is lipidated: N-myristoyl glycine. Residues Lys-58–Pro-195 form the Reverse transcriptase domain. The segment at Gly-165–Leu-264 is disordered. The segment covering Gly-232–Pro-247 has biased composition (pro residues). 2 CCHC-type zinc fingers span residues Gly-544–Val-561 and Asp-580–Ser-597. The disordered stretch occupies residues Lys-598–Phe-629. Residues Gln-604 to Gly-622 are compositionally biased toward polar residues. The 76-residue stretch at Phe-800 to Leu-875 folds into the Peptidase A2 domain. Asp-805 is a catalytic residue. Residues Tyr-890 to Leu-936 form the G-patch domain.

The protein belongs to the beta type-B retroviral polymerase family. HERV class-II K(HML-2) pol subfamily. In terms of processing, myristoylation is essential for retroviral assembly. Alteration of the glycine residue leads to a block in the budding of particles and an accumulation of Gag inside the cell. Post-translationally, specific enzymatic cleavages may yield mature proteins.

It is found in the cell membrane. It carries out the reaction Processing at the authentic HIV-1 PR recognition site and release of the mature p17 matrix and the p24 capsid protein, as a result of the cleavage of the -SQNY-|-PIVQ- cleavage site.. The catalysed reaction is DNA(n) + a 2'-deoxyribonucleoside 5'-triphosphate = DNA(n+1) + diphosphate. It catalyses the reaction Endonucleolytic cleavage to 5'-phosphomonoester.. Its function is as follows. The products of the Gag polyproteins of infectious retroviruses perform highly complex orchestrated tasks during the assembly, budding, maturation, and infection stages of the viral replication cycle. During viral assembly, the proteins form membrane associations and self-associations that ultimately result in budding of an immature virion from the infected cell. Gag precursors also function during viral assembly to selectively bind and package two plus strands of genomic RNA. Endogenous Gag proteins may have kept, lost or modified their original function during evolution. Early post-infection, the reverse transcriptase converts the viral RNA genome into double-stranded viral DNA. The RNase H domain of the reverse transcriptase performs two functions. It degrades the RNA template and specifically removes the RNA primer from the RNA/DNA hybrid. Following nuclear import, the integrase catalyzes the insertion of the linear, double-stranded viral DNA into the host cell chromosome. Endogenous Pol proteins may have kept, lost or modified their original function during evolution. The polypeptide is Endogenous retrovirus group K member 9 Pol protein (ERVK-9) (Homo sapiens (Human)).